The chain runs to 495 residues: Cytochrome P450 94C1 (495 aa).

A helical membrane pass occupies residues 2-22; sequence LLIISFTIVSFFFIIIFSLFH. Cys-439 is a binding site for heme.

It belongs to the cytochrome P450 family. Heme is required as a cofactor.

The protein resides in the membrane. Its subcellular location is the endoplasmic reticulum membrane. It catalyses the reaction a 12-hydroxyjasmonyl-L-alpha-amino acid + 2 reduced [NADPH--hemoprotein reductase] + 2 O2 = a 12-hydroxy-12-oxojasmonyl-L-alpha-amino acid + 2 oxidized [NADPH--hemoprotein reductase] + 3 H2O + 3 H(+). In terms of biological role, involved in the oxidation of the plant hormone jasmonoyl-L-isoleucine (JA-Ile), a bioactive phytohormone of the jasmonate-mediated signaling pathway. Converts 12-hydroxy-JA-Ile (12OH-JA-Ile) to the carboxy-derivative 12COOH-JA-Ile. Exerts negative feedback control on JA-Ile levels and plays a role in attenuation of jasmonate responses. Also functions as in-chain fatty acids hydroxylase in vitro. Catalyzes the hydroxylation of 12-hydroxy-jasmonoyl-L-phenylalanine (12OH-JA-Phe) in vitro. Converts 12OH-JA-Phe to the carboxy-derivative 12COOH-JA-Phe. This Arabidopsis thaliana (Mouse-ear cress) protein is Cytochrome P450 94C1.